The following is a 232-amino-acid chain: Ubiquinone biosynthesis O-methyltransferase (232 aa).

Positions 36, 55, 76, and 120 each coordinate S-adenosyl-L-methionine.

Belongs to the methyltransferase superfamily. UbiG/COQ3 family.

The catalysed reaction is a 3-demethylubiquinol + S-adenosyl-L-methionine = a ubiquinol + S-adenosyl-L-homocysteine + H(+). It catalyses the reaction a 3-(all-trans-polyprenyl)benzene-1,2-diol + S-adenosyl-L-methionine = a 2-methoxy-6-(all-trans-polyprenyl)phenol + S-adenosyl-L-homocysteine + H(+). Its pathway is cofactor biosynthesis; ubiquinone biosynthesis. Functionally, O-methyltransferase that catalyzes the 2 O-methylation steps in the ubiquinone biosynthetic pathway. This chain is Ubiquinone biosynthesis O-methyltransferase, found in Pseudomonas entomophila (strain L48).